The sequence spans 426 residues: Histidine--tRNA ligase (426 aa).

Belongs to the class-II aminoacyl-tRNA synthetase family. As to quaternary structure, homodimer.

It is found in the cytoplasm. The enzyme catalyses tRNA(His) + L-histidine + ATP = L-histidyl-tRNA(His) + AMP + diphosphate + H(+). The sequence is that of Histidine--tRNA ligase from Streptococcus pyogenes serotype M18 (strain MGAS8232).